The following is a 342-amino-acid chain: uncharacterized protein (342 aa).

This sequence belongs to the cycloisomerase 2 family.

This is an uncharacterized protein from Staphylococcus aureus (strain MSSA476).